The following is a 237-amino-acid chain: Ribonuclease PH (237 aa).

Residues Arg86 and 124–126 (GTR) each bind phosphate.

Belongs to the RNase PH family. Homohexameric ring arranged as a trimer of dimers.

The enzyme catalyses tRNA(n+1) + phosphate = tRNA(n) + a ribonucleoside 5'-diphosphate. Its function is as follows. Phosphorolytic 3'-5' exoribonuclease that plays an important role in tRNA 3'-end maturation. Removes nucleotide residues following the 3'-CCA terminus of tRNAs; can also add nucleotides to the ends of RNA molecules by using nucleoside diphosphates as substrates, but this may not be physiologically important. Probably plays a role in initiation of 16S rRNA degradation (leading to ribosome degradation) during starvation. In Methylobacterium radiotolerans (strain ATCC 27329 / DSM 1819 / JCM 2831 / NBRC 15690 / NCIMB 10815 / 0-1), this protein is Ribonuclease PH.